The sequence spans 338 residues: Ferrochelatase (338 aa).

Fe cation-binding residues include His189 and Glu294.

Belongs to the ferrochelatase family.

The protein resides in the cytoplasm. The enzyme catalyses heme b + 2 H(+) = protoporphyrin IX + Fe(2+). Its pathway is porphyrin-containing compound metabolism; protoheme biosynthesis; protoheme from protoporphyrin-IX: step 1/1. Functionally, catalyzes the ferrous insertion into protoporphyrin IX. This chain is Ferrochelatase, found in Pseudomonas putida (strain ATCC 47054 / DSM 6125 / CFBP 8728 / NCIMB 11950 / KT2440).